The sequence spans 838 residues: pre-rRNA 2'-O-ribose RNA methyltransferase FTSJ3 (838 aa).

Positions 56, 58, 76, 92, and 117 each coordinate S-adenosyl-L-methionine. Residue Lys-157 is the Proton acceptor of the active site. Residues 332 to 367 are disordered; that stretch reads ISLSSEEEEEGDEEEAVAETKQAPEEEEEREEEQLN. Ser-333, Ser-335, and Ser-336 each carry phosphoserine. Acidic residues predominate over residues 336 to 348; the sequence is SEEEEEGDEEEAV. Arg-390 carries the post-translational modification Citrulline. The segment at 453–482 is disordered; it reads IYVSDAEDDDDTSLESDLDPEELAGVRTHS. The span at 457–474 shows a compositional bias: acidic residues; the sequence is DAEDDDDTSLESDLDPEE. Phosphoserine occurs at positions 532 and 545. The disordered stretch occupies residues 537 to 639; sequence DADEALEISQ…GRGSKADEDG (103 aa). Lys-571 participates in a covalent cross-link: Glycyl lysine isopeptide (Lys-Gly) (interchain with G-Cter in SUMO2). A Phosphoserine modification is found at Ser-576. Glycyl lysine isopeptide (Lys-Gly) (interchain with G-Cter in SUMO2) cross-links involve residues Lys-634 and Lys-650. At Ser-667 the chain carries Phosphoserine. Lys-669 is covalently cross-linked (Glycyl lysine isopeptide (Lys-Gly) (interchain with G-Cter in SUMO2)). Ser-679 carries the post-translational modification Phosphoserine. A Glycyl lysine isopeptide (Lys-Gly) (interchain with G-Cter in SUMO2) cross-link involves residue Lys-701. A coiled-coil region spans residues 730–768; the sequence is IKKVAEAKARKKRRVLKKLEQTKKKAEAVVNTVDISERE. At Arg-774 the chain carries Citrulline. Residues 802–812 show a composition bias toward basic residues; the sequence is VRRPAGVKGHF. A disordered region spans residues 802 to 838; it reads VRRPAGVKGHFKVVDSRMKKDQRAQQRKEQKKKHKRK. Basic and acidic residues predominate over residues 813–829; it reads KVVDSRMKKDQRAQQRK.

This sequence belongs to the class I-like SAM-binding methyltransferase superfamily. RNA methyltransferase RlmE family. SPB1 subfamily. In terms of assembly, interacts with NIP7. Post-translationally, citrullinated by PADI4.

Its subcellular location is the nucleus. It is found in the nucleolus. It carries out the reaction a ribonucleotide in rRNA + S-adenosyl-L-methionine = a 2'-O-methylribonucleotide in rRNA + S-adenosyl-L-homocysteine + H(+). Functionally, RNA 2'-O-methyltransferase involved in the processing of the 34S pre-rRNA to 18S rRNA and in 40S ribosomal subunit formation. This Mus musculus (Mouse) protein is pre-rRNA 2'-O-ribose RNA methyltransferase FTSJ3 (Ftsj3).